The following is a 33-amino-acid chain: Gastrin (33 aa).

Pyrrolidone carboxylic acid is present on Gln-1. The residue at position 28 (Tyr-28) is a Sulfotyrosine. The residue at position 33 (Phe-33) is a Phenylalanine amide.

This sequence belongs to the gastrin/cholecystokinin family. In terms of processing, sulfation enhances proteolytic processing, and blocks peptide degradation. Levels of sulfation differ between proteolytically-cleaved gastrins and between tissues.

The protein resides in the secreted. Gastrin stimulates the stomach mucosa to produce and secrete hydrochloric acid and the pancreas to secrete its digestive enzymes. It also stimulates smooth muscle contraction and increases blood circulation and water secretion in the stomach and intestine. This chain is Gastrin (GAST), found in Macropus giganteus (Eastern gray kangaroo).